The following is a 96-amino-acid chain: Small ribosomal subunit protein bS6 (96 aa).

This sequence belongs to the bacterial ribosomal protein bS6 family.

In terms of biological role, binds together with bS18 to 16S ribosomal RNA. The sequence is that of Small ribosomal subunit protein bS6 from Corynebacterium aurimucosum (strain ATCC 700975 / DSM 44827 / CIP 107346 / CN-1) (Corynebacterium nigricans).